Reading from the N-terminus, the 369-residue chain is Anhydro-N-acetylmuramic acid kinase (369 aa).

12–19 (GTSMDGVD) contacts ATP.

This sequence belongs to the anhydro-N-acetylmuramic acid kinase family.

It carries out the reaction 1,6-anhydro-N-acetyl-beta-muramate + ATP + H2O = N-acetyl-D-muramate 6-phosphate + ADP + H(+). It participates in amino-sugar metabolism; 1,6-anhydro-N-acetylmuramate degradation. Its pathway is cell wall biogenesis; peptidoglycan recycling. Catalyzes the specific phosphorylation of 1,6-anhydro-N-acetylmuramic acid (anhMurNAc) with the simultaneous cleavage of the 1,6-anhydro ring, generating MurNAc-6-P. Is required for the utilization of anhMurNAc either imported from the medium or derived from its own cell wall murein, and thus plays a role in cell wall recycling. This is Anhydro-N-acetylmuramic acid kinase from Shewanella halifaxensis (strain HAW-EB4).